Here is a 334-residue protein sequence, read N- to C-terminus: Homoserine O-acetyltransferase (334 aa).

An AB hydrolase-1 domain is found at 61 to 318 (LVLHALTGDS…GSIHGHDAFL (258 aa)). Serine 148 functions as the Nucleophile in the catalytic mechanism. Arginine 205 serves as a coordination point for substrate. Catalysis depends on residues aspartate 285 and histidine 314. A substrate-binding site is contributed by aspartate 315.

Belongs to the AB hydrolase superfamily. MetX family. In terms of assembly, homodimer.

The protein localises to the cytoplasm. The enzyme catalyses L-homoserine + acetyl-CoA = O-acetyl-L-homoserine + CoA. It participates in amino-acid biosynthesis; L-methionine biosynthesis via de novo pathway; O-acetyl-L-homoserine from L-homoserine: step 1/1. In terms of biological role, transfers an acetyl group from acetyl-CoA to L-homoserine, forming acetyl-L-homoserine. This is Homoserine O-acetyltransferase from Deinococcus radiodurans (strain ATCC 13939 / DSM 20539 / JCM 16871 / CCUG 27074 / LMG 4051 / NBRC 15346 / NCIMB 9279 / VKM B-1422 / R1).